The following is a 140-amino-acid chain: MLKLRILSVGKTKEKWLEDAFNEYQKRLKANLQIECLWAKDSYQLLEWTQKESLIICLDPTGRLLTSEAFATFFSKCWEQGGSRLTIVIGGAEGLPLELKQHSILISLSLLTFTHQITRLILIEQIYRATEILKNSQYHK.

S-adenosyl-L-methionine-binding positions include Leu-58, Gly-90, and 108–113 (LSLLTF).

The protein belongs to the RNA methyltransferase RlmH family. As to quaternary structure, homodimer.

It localises to the cytoplasm. It catalyses the reaction pseudouridine(1915) in 23S rRNA + S-adenosyl-L-methionine = N(3)-methylpseudouridine(1915) in 23S rRNA + S-adenosyl-L-homocysteine + H(+). In terms of biological role, specifically methylates the pseudouridine at position 1915 (m3Psi1915) in 23S rRNA. This chain is Ribosomal RNA large subunit methyltransferase H, found in Protochlamydia amoebophila (strain UWE25).